The primary structure comprises 96 residues: Large ribosomal subunit protein bL25 (96 aa).

The protein belongs to the bacterial ribosomal protein bL25 family. Part of the 50S ribosomal subunit; part of the 5S rRNA/L5/L18/L25 subcomplex. Contacts the 5S rRNA. Binds to the 5S rRNA independently of L5 and L18.

Its function is as follows. This is one of the proteins that binds to the 5S RNA in the ribosome where it forms part of the central protuberance. The sequence is that of Large ribosomal subunit protein bL25 from Francisella philomiragia subsp. philomiragia (strain ATCC 25017 / CCUG 19701 / FSC 153 / O#319-036).